The sequence spans 229 residues: Demethylmenaquinone methyltransferase (229 aa).

S-adenosyl-L-methionine contacts are provided by residues T57, D77, and 101–102 (DV).

It belongs to the class I-like SAM-binding methyltransferase superfamily. MenG/UbiE family.

It catalyses the reaction a 2-demethylmenaquinol + S-adenosyl-L-methionine = a menaquinol + S-adenosyl-L-homocysteine + H(+). The protein operates within quinol/quinone metabolism; menaquinone biosynthesis; menaquinol from 1,4-dihydroxy-2-naphthoate: step 2/2. In terms of biological role, methyltransferase required for the conversion of demethylmenaquinol (DMKH2) to menaquinol (MKH2). This is Demethylmenaquinone methyltransferase from Chlamydia trachomatis serovar L2 (strain ATCC VR-902B / DSM 19102 / 434/Bu).